An 841-amino-acid polypeptide reads, in one-letter code: Transcription regulator protein BACH2 (841 aa).

Residues 37–103 form the BTB domain; sequence CDVTLIVERK…AYTAKLLLSR (67 aa). Disordered stretches follow at residues 153–173, 204–226, and 246–329; these read HEDC…TMDS, EALL…DALT, and SSHS…AACL. Residues 160–172 show a composition bias toward acidic residues; the sequence is AGEEEDEEEETMD. 2 stretches are compositionally biased toward basic and acidic residues: residues 214–224 and 298–313; these read TDTKESSEKDA and PDAK…DRKQ. Serine 315 bears the Phosphoserine mark. Glycyl lysine isopeptide (Lys-Gly) (interchain with G-Cter in SUMO2) cross-links involve residues lysine 382 and lysine 421. A Phosphoserine; by RPS6KB1 modification is found at serine 521. Residues 583–610 form a disordered region; that stretch reads QSYGTNSSDESGSFSEADSESCPVQDRG. Polar residues predominate over residues 584 to 598; it reads SYGTNSSDESGSFSE. A bZIP domain is found at 646–709; the sequence is FIHDVRRRSK…GELLDNFSCL (64 aa). The tract at residues 651-667 is basic motif; sequence RRRSKNRIAAQRCRKRK. Residues 671 to 678 form a leucine-zipper region; sequence IQNLECEI. The disordered stretch occupies residues 777 to 816; sequence PGPPWAPSNTSENCTSGRRLEGTDPGTFSERGPPLEPRSQ. The short motif at 821–841 is the Nuclear export signal element; it reads DFCQEMTDKCTTDEQPRKDYT.

It belongs to the bZIP family. CNC subfamily. As to quaternary structure, homodimer; disulfide-linked. Heterodimer of BACH2 and Maf-related transcription factors. In terms of processing, phosphorylation at Ser-521 downstream of the PI-3K pathway promotes nuclear export. The reversible disulfide bond may provide a mechanism to regulate the activity in oxidative stress responses. As to expression, B-cell specific.

It localises to the cytoplasm. The protein resides in the nucleus. Its function is as follows. Transcriptional regulator that acts as a repressor or activator. Binds to Maf recognition elements (MARE). Plays an important role in coordinating transcription activation and repression by MAFK. Induces apoptosis in response to oxidative stress through repression of the antiapoptotic factor HMOX1. Positively regulates the nuclear import of actin. Is a key regulator of adaptive immunity, crucial for the maintenance of regulatory T-cell function and B-cell maturation. The polypeptide is Transcription regulator protein BACH2 (BACH2) (Homo sapiens (Human)).